The sequence spans 267 residues: X-box-binding protein 1 (267 aa).

The Cytoplasmic segment spans residues methionine 1–asparagine 180. The disordered stretch occupies residues valine 35–leucine 60. At serine 61 the chain carries Phosphoserine. The bZIP domain maps to glutamate 63–leucine 126. The interval lysine 65–arginine 87 is basic motif. The tract at residues arginine 69–lysine 85 is nuclear localization signal (NLS). Positions leucine 91–leucine 126 are leucine-zipper. A helical; Signal-anchor for type II membrane protein membrane pass occupies residues isoleucine 181–serine 198. Over phenylalanine 199 to leucine 267 the chain is Lumenal.

Belongs to the bZIP family. Isoform 1 interacts with HM13. Isoform 1 interacts with RNF139; the interaction induces ubiquitination and degradation of isoform 1. Isoform 1 interacts (via luminal domain) with DERL1; the interaction obviates the need for ectodomain shedding prior HM13/SPP-mediated XBP1 isoform 1 cleavage. Isoform 1 interacts with HDAC3 and AKT1; the interactions occur in endothelial cell (EC) under disturbed flow. Isoform 1 interacts with the oncoprotein FOS. Interacts with SIRT1. In terms of processing, isoform 1 is ubiquitinated, leading to proteasome-mediated degradation in response to ER stress. Post-translationally, X-box-binding protein 1, cytoplasmic form and luminal form are produced by intramembrane proteolytic cleavage of ER membrane-anchored isoform 1 triggered by HM13/SPP in a DERL1-RNF139-dependent and VCP/p97-independent manner. X-box-binding protein 1, luminal form is ubiquitinated leading to proteasomal degradation. Acetylated by EP300; acetylation positively regulates the transcriptional activity of XBP1. Deacetylated by SIRT1; deacetylation negatively regulates the transcriptional activity of XBP1.

The protein resides in the nucleus. It is found in the endoplasmic reticulum. The protein localises to the cytoplasm. It localises to the endoplasmic reticulum membrane. Its subcellular location is the membrane. Its function is as follows. Functions as a transcription factor during endoplasmic reticulum (ER) stress by regulating the unfolded protein response (UPR). Required for cardiac myogenesis and hepatogenesis during embryonic development, and the development of secretory tissues such as exocrine pancreas and salivary gland. Involved in terminal differentiation of B lymphocytes to plasma cells and production of immunoglobulins. Modulates the cellular response to ER stress in a PIK3R-dependent manner. Binds to the cis-acting X box present in the promoter regions of major histocompatibility complex class II genes. Involved in VEGF-induced endothelial cell (EC) proliferation and retinal blood vessel formation during embryonic development but also for angiogenesis in adult tissues under ischemic conditions. Functions also as a major regulator of the UPR in obesity-induced insulin resistance and type 2 diabetes for the management of obesity and diabetes prevention. Functionally, acts as a weak transcriptional factor. Together with HDAC3, contributes to the activation of NFE2L2-mediated HMOX1 transcription factor gene expression in a PI(3)K/mTORC2/Akt-dependent signaling pathway leading to EC survival under disturbed flow/oxidative stress. Binds to the ER stress response element (ERSE) upon ER stress. Binds to the consensus 5'-GATGACGTG[TG]N(3)[AT]T-3' sequence related to cAMP responsive element (CRE)-like sequences. Associates preferentially to the HDAC3 gene promoter region in a static flow-dependent manner. Binds to the CDH5/VE-cadherin gene promoter region. The protein is X-box-binding protein 1 of Rattus norvegicus (Rat).